Consider the following 325-residue polypeptide: Glycerol-3-phosphate dehydrogenase [NAD(P)+] (325 aa).

Residues S14, F15, R35, and K109 each contribute to the NADPH site. 2 residues coordinate sn-glycerol 3-phosphate: K109 and G137. Residue A141 coordinates NADPH. Residues K192, D247, S257, R258, and N259 each coordinate sn-glycerol 3-phosphate. K192 (proton acceptor) is an active-site residue. R258 is a binding site for NADPH. NADPH is bound by residues L282 and E284.

It belongs to the NAD-dependent glycerol-3-phosphate dehydrogenase family.

It localises to the cytoplasm. The enzyme catalyses sn-glycerol 3-phosphate + NAD(+) = dihydroxyacetone phosphate + NADH + H(+). It carries out the reaction sn-glycerol 3-phosphate + NADP(+) = dihydroxyacetone phosphate + NADPH + H(+). It participates in membrane lipid metabolism; glycerophospholipid metabolism. Catalyzes the reduction of the glycolytic intermediate dihydroxyacetone phosphate (DHAP) to sn-glycerol 3-phosphate (G3P), the key precursor for phospholipid synthesis. The chain is Glycerol-3-phosphate dehydrogenase [NAD(P)+] from Rickettsia conorii (strain ATCC VR-613 / Malish 7).